A 255-amino-acid polypeptide reads, in one-letter code: Flap endonuclease Xni (255 aa).

Asp105 contacts Mg(2+). The 5'-3' exonuclease domain maps to 162–253 (EHSQFIDYLA…NLSQFRLPNP (92 aa)). K(+) is bound by residues Leu172, Ala173, Pro181, Val183, and Ile186. The segment at 185 to 190 (GIGPKS) is interaction with DNA.

It belongs to the Xni family. It depends on Mg(2+) as a cofactor. K(+) is required as a cofactor.

Has flap endonuclease activity. During DNA replication, flap endonucleases cleave the 5'-overhanging flap structure that is generated by displacement synthesis when DNA polymerase encounters the 5'-end of a downstream Okazaki fragment. In Shewanella sediminis (strain HAW-EB3), this protein is Flap endonuclease Xni.